The sequence spans 441 residues: Mitochondrial distribution and morphology protein 12 (441 aa).

The SMP-LTD domain maps to 1–441 (MSIDIDWERA…VYPSFWTFLV (441 aa)). Disordered regions lie at residues 70 to 89 (YEDG…PMRE) and 180 to 289 (TPLR…RMRE). Polar residues-rich tracts occupy residues 226 to 245 (SRPS…SVST) and 253 to 263 (SSQTVLANNPG).

It belongs to the MDM12 family. Component of the ER-mitochondria encounter structure (ERMES) or MDM complex, composed of MMM1, MDM10, MDM12 and MDM34. An MMM1 homodimer associates with one molecule of MDM12 on each side in a pairwise head-to-tail manner, and the SMP-LTD domains of MMM1 and MDM12 generate a continuous hydrophobic tunnel for phospholipid trafficking.

The protein localises to the mitochondrion outer membrane. Its subcellular location is the endoplasmic reticulum membrane. Functionally, component of the ERMES/MDM complex, which serves as a molecular tether to connect the endoplasmic reticulum (ER) and mitochondria. Components of this complex are involved in the control of mitochondrial shape and protein biogenesis, and function in nonvesicular lipid trafficking between the ER and mitochondria. MDM12 is required for the interaction of the ER-resident membrane protein MMM1 and the outer mitochondrial membrane-resident beta-barrel protein MDM10. The MDM12-MMM1 subcomplex functions in the major beta-barrel assembly pathway that is responsible for biogenesis of all mitochondrial outer membrane beta-barrel proteins, and acts in a late step after the SAM complex. The MDM10-MDM12-MMM1 subcomplex further acts in the TOM40-specific pathway after the action of the MDM12-MMM1 complex. Essential for establishing and maintaining the structure of mitochondria and maintenance of mtDNA nucleoids. In Paracoccidioides brasiliensis (strain Pb03), this protein is Mitochondrial distribution and morphology protein 12.